Reading from the N-terminus, the 426-residue chain is UDP-N-acetylglucosamine 1-carboxyvinyltransferase (426 aa).

24–25 provides a ligand contact to phosphoenolpyruvate; the sequence is KN. Arg-95 is a UDP-N-acetyl-alpha-D-glucosamine binding site. The active-site Proton donor is the Cys-119. Cys-119 is modified (2-(S-cysteinyl)pyruvic acid O-phosphothioketal). Residues 124-128, Asp-308, and Val-330 contribute to the UDP-N-acetyl-alpha-D-glucosamine site; that span reads RPVDQ.

This sequence belongs to the EPSP synthase family. MurA subfamily.

Its subcellular location is the cytoplasm. The catalysed reaction is phosphoenolpyruvate + UDP-N-acetyl-alpha-D-glucosamine = UDP-N-acetyl-3-O-(1-carboxyvinyl)-alpha-D-glucosamine + phosphate. Its pathway is cell wall biogenesis; peptidoglycan biosynthesis. Cell wall formation. Adds enolpyruvyl to UDP-N-acetylglucosamine. This is UDP-N-acetylglucosamine 1-carboxyvinyltransferase from Deinococcus radiodurans (strain ATCC 13939 / DSM 20539 / JCM 16871 / CCUG 27074 / LMG 4051 / NBRC 15346 / NCIMB 9279 / VKM B-1422 / R1).